Reading from the N-terminus, the 222-residue chain is Lipid transferase CIDEC (222 aa).

The segment covering 1 to 19 (MAMYTAVSTSVVTQQQLSE) has biased composition (polar residues). Disordered regions lie at residues 1-33 (MAMY…CRVT) and 203-222 (EQPP…KMLQ). Residues 1-33 (MAMYTAVSTSVVTQQQLSEPSAEAPRARPCRVT) form a required for liquid-liquid phase separation (LLPS) region. One can recognise a CIDE-N domain in the interval 26–103 (RARPCRVTTA…VLHKGQKWQP (78 aa)).

Belongs to the CIDE family. Homodimer. Homooligomer; undergoes liquid-liquid phase separation (LLPS) via its N-terminus, facilitating lipid droplet fusion, occurs at the lipid droplet contact sites. Interacts with CIDEA. Interacts with PLIN1. Interacts with NFAT5; this interaction is direct and retains NFAT5 in the cytoplasm. Interacts with CEBPB. Interacts with isoform CLSTN3beta of CLSTN3; inhibiting the lipid transferase activity of CIDEC. Post-translationally, ubiquitinated and targeted to proteasomal degradation, resulting in a short half-life (about 15 minutes in 3T3-L1 cells). Protein stability depends on triaclyglycerol synthesis, fatty acid availability and lipid droplet formation.

The protein resides in the lipid droplet. It is found in the endoplasmic reticulum. The protein localises to the nucleus. It carries out the reaction a triacyl-sn-glycerol(in) = a triacyl-sn-glycerol(out). Functionally, lipid transferase specifically expressed in white adipose tissue, which promotes unilocular lipid droplet formation by mediating lipid droplet fusion. Lipid droplet fusion promotes their enlargement, restricting lipolysis and favoring lipid storage. Localizes on the lipid droplet surface, at focal contact sites between lipid droplets, and mediates atypical lipid droplet fusion by undergoing liquid-liquid phase separation (LLPS) and promoting directional net neutral lipid transfer from the smaller to larger lipid droplets. The transfer direction may be driven by the internal pressure difference between the contacting lipid droplet pair. Its role in neutral lipid transfer and lipid droplet enlargement is activated by the interaction with PLIN1. May also act as a CEBPB coactivator in the white adipose tissue to control the expression of a subset of CEBPB downstream target genes, including SOCS1, SOCS3, TGFB1, TGFBR1, ID2 and XDH. When overexpressed in preadipocytes, induces apoptosis or increases cell susceptibility to apoptosis induced by serum deprivation or TGFB treatment. In Bos taurus (Bovine), this protein is Lipid transferase CIDEC.